Here is a 370-residue protein sequence, read N- to C-terminus: F-box protein At3g20690 (370 aa).

The 45-residue stretch at 1–45 folds into the F-box domain; sequence MMMSDLPHDLVEEILSRLPLISLKAMRSTCKTWNVLSKHRSFANK.

The protein is F-box protein At3g20690 of Arabidopsis thaliana (Mouse-ear cress).